The following is a 217-amino-acid chain: Claudin-9 (217 aa).

Over Met1–Thr12 the chain is Cytoplasmic. The chain crosses the membrane as a helical span at residues Leu13–Thr33. Topologically, residues Ala34–Arg81 are extracellular. A helical membrane pass occupies residues Ala82–Ala102. At Gln103–Arg116 the chain is on the cytoplasmic side. A helical transmembrane segment spans residues Ile117–Cys137. Topologically, residues Trp138–Glu159 are extracellular. The helical transmembrane segment at Leu160–Leu180 threads the bilayer. The Cytoplasmic portion of the chain corresponds to Leu181–Val217.

The protein belongs to the claudin family. In terms of assembly, interacts with CLDN1, CD81 and OCLN.

It localises to the cell junction. Its subcellular location is the tight junction. It is found in the cell membrane. In terms of biological role, plays a major role in tight junction-specific obliteration of the intercellular space, through calcium-independent cell-adhesion activity. The protein is Claudin-9 (Cldn9) of Mus musculus (Mouse).